We begin with the raw amino-acid sequence, 202 residues long: Large ribosomal subunit protein bL9 (202 aa).

The interval 177–202 (AGEFFDPEAEPDDVAEAGGEQTAEEK) is disordered. Acidic residues predominate over residues 181 to 191 (FDPEAEPDDVA).

Belongs to the bacterial ribosomal protein bL9 family.

Binds to the 23S rRNA. The sequence is that of Large ribosomal subunit protein bL9 from Nitrobacter hamburgensis (strain DSM 10229 / NCIMB 13809 / X14).